The chain runs to 112 residues: Tyrosine-protein phosphatase 8 (112 aa).

The region spanning 1-112 (ENSTAIVMIT…ANSEYGPVVV (112 aa)) is the Tyrosine-protein phosphatase domain.

Belongs to the protein-tyrosine phosphatase family.

The enzyme catalyses O-phospho-L-tyrosyl-[protein] + H2O = L-tyrosyl-[protein] + phosphate. The sequence is that of Tyrosine-protein phosphatase 8 (STY-8) from Styela plicata (Wrinkled sea squirt).